Reading from the N-terminus, the 308-residue chain is Staphylococcal superantigen-like 4 (308 aa).

The N-terminal stretch at 1–30 (MKITTIAKTSLALGLLTTGVITTTTQAANA) is a signal peptide. The segment at 28 to 117 (ANATTPSSTK…TTKQVPTEIN (90 aa)) is disordered. Composition is skewed to polar residues over residues 33-47 (PSSTKVEAPQSTPPS) and 55-76 (SKPNATTPPSTKVEAPQQTANA). A compositionally biased stretch (low complexity) spans 77-93 (TTPPSTKVTTPPSTNTP). The segment covering 94 to 114 (QPMQSTKSDTPQSPTTKQVPT) has biased composition (polar residues). The tract at residues 180–278 (VDVFVVLEEN…VIKMKNGGKY (99 aa)) is sialyl Lewis X-binding.

The protein belongs to the staphylococcal/streptococcal toxin family.

It is found in the secreted. In terms of biological role, secreted protein that plays a role in immune innate response inhibition by interfering with host TLR2-mediated pathway. The sequence is that of Staphylococcal superantigen-like 4 from Staphylococcus aureus (strain Newman).